Consider the following 354-residue polypeptide: Rhodopsin (354 aa).

The Extracellular portion of the chain corresponds to 1 to 36 (MNGTEGPMFYVPMSNATGVVKSPYDYPQYYLVAPWA). Asparagine 2 and asparagine 15 each carry an N-linked (GlcNAc...) asparagine glycan. The helical transmembrane segment at 37–61 (YGCLAAYMFFLIITGFPINFLTLYV) threads the bilayer. Residues 62-73 (TIEHKKLRTPLN) lie on the Cytoplasmic side of the membrane. Residues 74 to 96 (YILLNLAISDLFMVFGGFTTTMY) form a helical membrane-spanning segment. Topologically, residues 97–110 (TSLHGYFVFGRIGC) are extracellular. Residues cysteine 110 and cysteine 187 are joined by a disulfide bond. Residues 111–133 (NLEGFFATLGGEMGLWSLVVLAF) traverse the membrane as a helical segment. The 'Ionic lock' involved in activated form stabilization motif lies at 134 to 136 (ERW). The Cytoplasmic segment spans residues 134–152 (ERWMVVCKPVSNFRFGENH). Residues 153 to 173 (AIMGVVFTWFMACTCAVPPLV) traverse the membrane as a helical segment. Topologically, residues 174 to 202 (GWSRYIPEGMQCSCGVDYYTRAPGYNNES) are extracellular. Residues 203 to 224 (FVIYMFLVHFIIPLIVIFFCYG) traverse the membrane as a helical segment. At 225-252 (RLVCTVKDAAAQQQESETTQRAEREVTR) the chain is on the cytoplasmic side. Residues 253-274 (MVVIMVIGFLICWIPYASVAWY) form a helical membrane-spanning segment. At 275-286 (IFTHQGSEFGPV) the chain is on the extracellular side. A helical membrane pass occupies residues 287–308 (FMTVPAFFAKSAAVYNPCIYIC). Lysine 296 is modified (N6-(retinylidene)lysine). The Cytoplasmic portion of the chain corresponds to 309–354 (MNKQFRHCMITTLCCGKNPFEEEEGASTTASKTEASSVSSSSVSPA). S-palmitoyl cysteine attachment occurs at residues cysteine 322 and cysteine 323. The interval 333-354 (GASTTASKTEASSVSSSSVSPA) is disordered. Low complexity predominate over residues 334 to 354 (ASTTASKTEASSVSSSSVSPA).

This sequence belongs to the G-protein coupled receptor 1 family. Opsin subfamily. Post-translationally, phosphorylated on some or all of the serine and threonine residues present in the C-terminal region. In terms of processing, contains one covalently linked retinal chromophore.

The protein localises to the membrane. The protein resides in the cell projection. Its subcellular location is the cilium. It is found in the photoreceptor outer segment. Photoreceptor required for image-forming vision at low light intensity. While most salt water fish species use retinal as chromophore, most freshwater fish use 3-dehydroretinal, or a mixture of retinal and 3-dehydroretinal. Light-induced isomerization of 11-cis to all-trans retinal triggers a conformational change that activates signaling via G-proteins. Subsequent receptor phosphorylation mediates displacement of the bound G-protein alpha subunit by arrestin and terminates signaling. This Cyprinus carpio (Common carp) protein is Rhodopsin (rho).